The chain runs to 246 residues: Peroxisomal membrane protein 11A (246 aa).

Residues 1-93 (MDAFIRVANQ…LCLTLANLNR (93 aa)) are Cytoplasmic-facing. A helical transmembrane segment spans residues 94-114 (VVYYICDTVLWAKSVGLTSGI). Over 115–217 (NREKWQMRAA…LNQLGIYKSN (103 aa)) the chain is Lumenal. A helical transmembrane segment spans residues 218–238 (LGVVGFGGLVSSVAGLITVVY). The tract at residues 218–238 (LGVVGFGGLVSSVAGLITVVY) is required for homodimerization, interaction with PEX11G, and peroxisomal localization. Residues 239-246 (PQLKLKAR) are Cytoplasmic-facing.

This sequence belongs to the peroxin-11 family. In terms of assembly, homodimer. Heterodimer with PEX11G. Probably interacts with COPB2 and COPA. Interacts with PEX19. Interacts with FIS1. As to expression, expressed at high levels in kidney, liver, lung, brain, and testis and at low levels in heart, spleen and skeletal muscle.

The protein resides in the peroxisome membrane. In terms of biological role, may be involved in peroxisomal proliferation and may regulate peroxisomes division. May mediate binding of coatomer proteins to the peroxisomal membrane. Promotes membrane protrusion and elongation on the peroxisomal surface. This chain is Peroxisomal membrane protein 11A (Pex11a), found in Rattus norvegicus (Rat).